We begin with the raw amino-acid sequence, 210 residues long: CKLF-like MARVEL transmembrane domain-containing protein 2B (210 aa).

The next 4 helical transmembrane spans lie at 35 to 55 (FWAQGHAECKSLIMILLIAAM), 65 to 85 (PIVILLLTMELSICAFFFFLY), 103 to 123 (LMNDLACSTFLIGGIFFALEA), and 127 to 147 (LPVPYLTGMILMGVTAFISII). An MARVEL domain is found at 35–157 (FWAQGHAECK…DLCLQRRQFK (123 aa)).

The protein belongs to the chemokine-like factor family.

Its subcellular location is the membrane. This Mus musculus (Mouse) protein is CKLF-like MARVEL transmembrane domain-containing protein 2B (Cmtm2b).